A 460-amino-acid polypeptide reads, in one-letter code: tRNA hydroxylation protein P (460 aa).

It belongs to the peptidase U32 family.

Functionally, involved in prephenate-dependent formation of 5-hydroxyuridine (ho5U) modification at position 34 in tRNAs, the first step in 5-carboxymethoxyuridine (cmo5U) biosynthesis. The sequence is that of tRNA hydroxylation protein P from Haemophilus influenzae (strain ATCC 51907 / DSM 11121 / KW20 / Rd).